We begin with the raw amino-acid sequence, 602 residues long: RecBCD enzyme subunit RecD (602 aa).

171–178 (GGPGTGKT) serves as a coordination point for ATP.

It belongs to the RecD family. Heterotrimer of RecB, RecC and RecD. All subunits contribute to DNA-binding.

The enzyme catalyses Couples ATP hydrolysis with the unwinding of duplex DNA at the replication fork by translocating in the 5'-3' direction. This creates two antiparallel DNA single strands (ssDNA). The leading ssDNA polymer is the template for DNA polymerase III holoenzyme which synthesizes a continuous strand.. It carries out the reaction ATP + H2O = ADP + phosphate + H(+). Functionally, a helicase/nuclease that prepares dsDNA breaks (DSB) for recombinational DNA repair. Binds to DSBs and unwinds DNA via a highly rapid and processive ATP-dependent bidirectional helicase activity. Unwinds dsDNA until it encounters a Chi (crossover hotspot instigator) sequence from the 3' direction. Cuts ssDNA a few nucleotides 3' to the Chi site. The properties and activities of the enzyme are changed at Chi. The Chi-altered holoenzyme produces a long 3'-ssDNA overhang and facilitates RecA-binding to the ssDNA for homologous DNA recombination and repair. Holoenzyme degrades any linearized DNA that is unable to undergo homologous recombination. In the holoenzyme this subunit has ssDNA-dependent ATPase and 5'-3' helicase activity. When added to pre-assembled RecBC greatly stimulates nuclease activity and augments holoenzyme processivity. Negatively regulates the RecA-loading ability of RecBCD. This is RecBCD enzyme subunit RecD from Buchnera aphidicola subsp. Acyrthosiphon pisum (strain APS) (Acyrthosiphon pisum symbiotic bacterium).